We begin with the raw amino-acid sequence, 459 residues long: MLKIYNSITRQKQEFKPITPGKIGMYVCGVTIYDLCHIGHGRTFVSFDMIVRYLRYAGYEVNFQRNITDVDDKIIKRANENNESCEALTERLIGEMHQDFDALNMLRPDFEPRATLHIAEIIDMVELLLARGHAYVASDGDVLFSVASYPDYGRLSGQNLDQLQAGARVEVDETKQNPMDFVLWKMSKPGEPTWESPWGPGRPGWHIECSAMNSKHLGLHFDIHGGGSDLQFPHHENEIAQSCCAHDTPYVNYWMHTGMVMVDREKMSKSLGNFFTIRDVLGHYDAETVRYFLLSGHYRSQLNYSEDNLKQARSALERLYTAIKDVDLTVAAAPAEEFIAKFKAAMDDDFNTPEAYSVLFDMVREINRLKLTDMAQASALAVTLKQLADVLGLLSQEPEAFFQGGGSDDEVAEIEALIVERNRARTEKDWAAADVARNRLNELGVELEDGPSGTTWRKK.

Residue C28 participates in Zn(2+) binding. Residues 30 to 40 (VTIYDLCHIGH) carry the 'HIGH' region motif. The Zn(2+) site is built by C209, H234, and E238. The 'KMSKS' region motif lies at 266–270 (KMSKS). K269 provides a ligand contact to ATP.

Belongs to the class-I aminoacyl-tRNA synthetase family. As to quaternary structure, monomer. Zn(2+) is required as a cofactor.

It is found in the cytoplasm. The catalysed reaction is tRNA(Cys) + L-cysteine + ATP = L-cysteinyl-tRNA(Cys) + AMP + diphosphate. In Shewanella baltica (strain OS195), this protein is Cysteine--tRNA ligase.